Reading from the N-terminus, the 496-residue chain is PE-PGRS family protein PE_PGRS1 (496 aa).

Residues 4–94 (LITSPATVAA…VCYAAAETAN (91 aa)) enclose the PE domain. Residues 461–480 (LIGNGGDGGPGMFGGPGGAG) form a disordered region.

Belongs to the mycobacterial PE family. PGRS subfamily.

The protein resides in the secreted. It is found in the cell wall. Its subcellular location is the host mitochondrion. When expressed in host mitochondria, induces mitochondrial stress which results in mitochondrial membrane depolarization, up-regulation of mitochondrial superoxides and release of cytochrome-C in the cytoplasm. The cytochrome-C in cytoplasm triggers the activation of caspase-9, caspase-3 and caspase-7, leading to the apoptosis of host macrophages. Being a late expressing protein, apoptosis induction by PE_PGRS1 may facilitate the M.tuberculosis survival and silent expansion of its niche at the site of granuloma. In terms of biological role, when expressed in THP-1 macrophages, promotes the survival of mycobacteria within macrophages after a 24- to 48-hour infection by blocking endoplasmic reticulum stress and inhibiting host cell apoptosis. Can chelate excessive intracellular calcium in THP-1 macrophages, which reduces the concentration of intracellular free Ca(2+) and blocks the PERK-eIF2alpha-ATF4 axis, thereby inhibiting the endoplasmic reticulum stress caused by infection. It also reduces the apoptosis of THP-1 macrophages by decreasing the activation of caspase-3 and caspase-9. The polypeptide is PE-PGRS family protein PE_PGRS1 (Mycobacterium tuberculosis (strain ATCC 25618 / H37Rv)).